The chain runs to 361 residues: Histidinol-phosphate aminotransferase (361 aa).

At Lys-219 the chain carries N6-(pyridoxal phosphate)lysine.

The protein belongs to the class-II pyridoxal-phosphate-dependent aminotransferase family. Histidinol-phosphate aminotransferase subfamily. As to quaternary structure, homodimer. Pyridoxal 5'-phosphate serves as cofactor.

The enzyme catalyses L-histidinol phosphate + 2-oxoglutarate = 3-(imidazol-4-yl)-2-oxopropyl phosphate + L-glutamate. The protein operates within amino-acid biosynthesis; L-histidine biosynthesis; L-histidine from 5-phospho-alpha-D-ribose 1-diphosphate: step 7/9. In Acinetobacter baumannii (strain AB307-0294), this protein is Histidinol-phosphate aminotransferase.